The chain runs to 230 residues: MNYEGKTKIVKVTGDYALLEFKDDITAGDGLKHDVLTGKGSICAETTAILMKYLSEKGIKTHLVEYIPPRTLKVIPLKMFPLEVVVRLKKAGSFVRRYGGAEGEDLPVPLVEFFIKDDERHDPMVCVDHLEILGIATKKQAEKMKEAAVKITLALKEFFERANFELWDIKYEFGLDKDGNVVLGDEISPDTFRLRKKGEIFDKDVYRRDLGDPLKKYREVLELCRSLNSQ.

The protein belongs to the SAICAR synthetase family.

The enzyme catalyses 5-amino-1-(5-phospho-D-ribosyl)imidazole-4-carboxylate + L-aspartate + ATP = (2S)-2-[5-amino-1-(5-phospho-beta-D-ribosyl)imidazole-4-carboxamido]succinate + ADP + phosphate + 2 H(+). It functions in the pathway purine metabolism; IMP biosynthesis via de novo pathway; 5-amino-1-(5-phospho-D-ribosyl)imidazole-4-carboxamide from 5-amino-1-(5-phospho-D-ribosyl)imidazole-4-carboxylate: step 1/2. This chain is Phosphoribosylaminoimidazole-succinocarboxamide synthase (purC), found in Thermotoga maritima (strain ATCC 43589 / DSM 3109 / JCM 10099 / NBRC 100826 / MSB8).